The primary structure comprises 515 residues: Fatty acyl-CoA reductase 2 (515 aa).

Residues M1–N465 lie on the Cytoplasmic side of the membrane. Residues I466–A484 form a helical membrane-spanning segment. Topologically, residues R485–V515 are peroxisomal.

This sequence belongs to the fatty acyl-CoA reductase family.

The protein resides in the peroxisome membrane. The catalysed reaction is a long-chain fatty acyl-CoA + 2 NADPH + 2 H(+) = a long-chain primary fatty alcohol + 2 NADP(+) + CoA. It carries out the reaction hexadecanoyl-CoA + 2 NADPH + 2 H(+) = hexadecan-1-ol + 2 NADP(+) + CoA. It catalyses the reaction octadecanoyl-CoA + 2 NADPH + 2 H(+) = octadecan-1-ol + 2 NADP(+) + CoA. The enzyme catalyses a very long-chain fatty acyl-CoA + 2 NADPH + 2 H(+) = a very long-chain primary fatty alcohol + 2 NADP(+) + CoA. The catalysed reaction is an ultra-long-chain fatty acyl-CoA + 2 NADPH + 2 H(+) = an ultra long-chain primary fatty alcohol + 2 NADP(+) + CoA. It carries out the reaction eicosanoyl-CoA + 2 NADPH + 2 H(+) = eicosan-1-ol + 2 NADP(+) + CoA. It catalyses the reaction docosanoyl-CoA + 2 NADPH + 2 H(+) = docosan-1-ol + 2 NADP(+) + CoA. The enzyme catalyses tetracosanoyl-CoA + 2 NADPH + 2 H(+) = tetracosan-1-ol + 2 NADP(+) + CoA. The catalysed reaction is hexacosanoyl-CoA + 2 NADPH + 2 H(+) = hexacosan-1-ol + 2 NADP(+) + CoA. It carries out the reaction octacosanoyl-CoA + 2 NADPH + 2 H(+) = octacosan-1-ol + 2 NADP(+) + CoA. It catalyses the reaction triacontanoyl-CoA + 2 NADPH + 2 H(+) = triacontan-1-ol + 2 NADP(+) + CoA. The enzyme catalyses 18-methylnonadecanoyl-CoA + 2 NADPH + 2 H(+) = 18-methylnonadecan-1-ol + 2 NADP(+) + CoA. The catalysed reaction is 20-methylheneicosanoyl-CoA + 2 NADPH + 2 H(+) = 20-methylheneicosan-1-ol + 2 NADP(+) + CoA. It carries out the reaction 22-methyltricosanoyl-CoA + 2 NADPH + 2 H(+) = 22-methyltricosan-1-ol + 2 NADP(+) + CoA. It catalyses the reaction 24-methylpentacosanoyl-CoA + 2 NADPH + 2 H(+) = 24-methylpentacosan-1-ol + 2 NADP(+) + CoA. Functionally, catalyzes the reduction of saturated but not unsaturated C16 or C18 fatty acyl-CoA to fatty alcohols (FAls). A lower activity can be observed with shorter fatty acyl-CoA substrates. Can produce very long-chain and ultra long-chain FAls, regardless of whether they have a straight or branched chain. Involved in the production of ether lipids/plasmalogens and wax monoesters whose synthesis requires FAls as substrates. In Bos taurus (Bovine), this protein is Fatty acyl-CoA reductase 2.